Reading from the N-terminus, the 235-residue chain is MNRLSKRKKILNCIDKSVQYNIADGLRILQETARVKFVENVDVAVNLGINPRRSDQNVRNSVVMPHGLGKKIRIAVFTQGESNVVLARRAGADFAGLEDLCQLIKTKGCTGFDVFIASPDVMNIVSQLGPILGPKGLMPNPKMSTVTQNLTDTIRNFKLGQVRYKNDKNGIIHAVIGKINFNISCLQENLEALVFSIYQVKPTQFKGIYIKKIYISTTMGRSILIDKSSLNVLIH.

It belongs to the universal ribosomal protein uL1 family. In terms of assembly, part of the 50S ribosomal subunit.

In terms of biological role, binds directly to 23S rRNA. The L1 stalk is quite mobile in the ribosome, and is involved in E site tRNA release. Protein L1 is also a translational repressor protein, it controls the translation of the L11 operon by binding to its mRNA. This Blochmanniella floridana protein is Large ribosomal subunit protein uL1.